Consider the following 356-residue polypeptide: NADH-quinone oxidoreductase subunit H (356 aa).

Helical transmembrane passes span 17–37 (TGGILLVVIWVLLSLAFLLLA), 51–71 (PNVVGPFGLLQSFADFFKFVL), 83–103 (VVFILAPLISLILAFVGWAVV), 116–136 (VGILYLLAMSSLGVYGIIMGG), 162–182 (IGLIIITVILLAGSMNLSTIV), 202–222 (LVLLPVMVVAMGMFYISALAE), 261–281 (IVLMCAMISVLFFGGWNPGFP), 295–315 (LFLALVFYAKICFWFFMFAMA), and 334–354 (VFLPTSLVLVAAVAAWRVFGP).

This sequence belongs to the complex I subunit 1 family. As to quaternary structure, NDH-1 is composed of 14 different subunits. Subunits NuoA, H, J, K, L, M, N constitute the membrane sector of the complex.

The protein resides in the cell inner membrane. The enzyme catalyses a quinone + NADH + 5 H(+)(in) = a quinol + NAD(+) + 4 H(+)(out). NDH-1 shuttles electrons from NADH, via FMN and iron-sulfur (Fe-S) centers, to quinones in the respiratory chain. The immediate electron acceptor for the enzyme in this species is believed to be ubiquinone. Couples the redox reaction to proton translocation (for every two electrons transferred, four hydrogen ions are translocated across the cytoplasmic membrane), and thus conserves the redox energy in a proton gradient. This subunit may bind ubiquinone. This is NADH-quinone oxidoreductase subunit H from Caulobacter vibrioides (strain ATCC 19089 / CIP 103742 / CB 15) (Caulobacter crescentus).